The following is a 472-amino-acid chain: Glycogen synthase (472 aa).

Lys-16 is a binding site for ADP-alpha-D-glucose.

Belongs to the glycosyltransferase 1 family. Bacterial/plant glycogen synthase subfamily.

The catalysed reaction is [(1-&gt;4)-alpha-D-glucosyl](n) + ADP-alpha-D-glucose = [(1-&gt;4)-alpha-D-glucosyl](n+1) + ADP + H(+). The protein operates within glycan biosynthesis; glycogen biosynthesis. Functionally, synthesizes alpha-1,4-glucan chains using ADP-glucose. The chain is Glycogen synthase from Jannaschia sp. (strain CCS1).